A 416-amino-acid polypeptide reads, in one-letter code: MIFDKEDYKAFDPELWNAIDAEAERQQNNIELIASENVVSKAVMAAQGTLLTNKYAEGYPGKRYYGGTAVIDVVETLAIERAKKLFGVKFANVQPHSGSQANAAVYMSLIQPGDTVMGMDLSAGGHLTHGAPVSFSGKTYNFVSYNVDKESELLDYDAILAQAKEVRPKLIVAGASAYSRIIDFAKFREIADAVGAYLMVDMAHIAGLVASGHHPSPVPYAHVTTTTTHKTLRGPRGGLILTDDEDIAKKLNSAVFPGLQGGPLEHVIAAKAVALKEALDPAFKEYGENVIKNAAAMADVFNQHPDFRVISGGTNNHLFLVDVTKVVENGKVAQNVLEEVNITLNKNSIPYEQLSPFKTSGIRVGSPAITSRGMGEAESRQIAEWMVEALENHDKPEVLERIRGDVKVLTDAFPLY.

(6S)-5,6,7,8-tetrahydrofolate is bound by residues Leu121 and 125 to 127; that span reads GHL. The residue at position 230 (Lys230) is an N6-(pyridoxal phosphate)lysine. Residue 355–357 participates in (6S)-5,6,7,8-tetrahydrofolate binding; that stretch reads SPF.

It belongs to the SHMT family. In terms of assembly, homodimer. Pyridoxal 5'-phosphate is required as a cofactor.

The protein localises to the cytoplasm. It catalyses the reaction (6R)-5,10-methylene-5,6,7,8-tetrahydrofolate + glycine + H2O = (6S)-5,6,7,8-tetrahydrofolate + L-serine. Its pathway is one-carbon metabolism; tetrahydrofolate interconversion. It functions in the pathway amino-acid biosynthesis; glycine biosynthesis; glycine from L-serine: step 1/1. In terms of biological role, catalyzes the reversible interconversion of serine and glycine with tetrahydrofolate (THF) serving as the one-carbon carrier. This reaction serves as the major source of one-carbon groups required for the biosynthesis of purines, thymidylate, methionine, and other important biomolecules. Also exhibits THF-independent aldolase activity toward beta-hydroxyamino acids, producing glycine and aldehydes, via a retro-aldol mechanism. The chain is Serine hydroxymethyltransferase from Streptococcus thermophilus (strain ATCC BAA-250 / LMG 18311).